We begin with the raw amino-acid sequence, 454 residues long: Chromosomal replication initiator protein DnaA (454 aa).

The interval 1 to 83 (MMTDSMRLVW…RPLKVLLEVA (83 aa)) is domain I, interacts with DnaA modulators. Residues 83 to 115 (AECVAEAPETPEEAPQQLCLPAFADIPRPSSGR) form a domain II region. Positions 116 to 333 (LLNRDFTFDS…SGIKGLAARN (218 aa)) are domain III, AAA+ region. ATP is bound by residues glycine 160, glycine 162, lysine 163, and serine 164. A domain IV, binds dsDNA region spans residues 334–454 (SIMGRGIDLK…LCGKIEAGEF (121 aa)).

It belongs to the DnaA family. Oligomerizes as a right-handed, spiral filament on DNA at oriC.

The protein localises to the cytoplasm. Plays an essential role in the initiation and regulation of chromosomal replication. ATP-DnaA binds to the origin of replication (oriC) to initiate formation of the DNA replication initiation complex once per cell cycle. Binds the DnaA box (a 9 base pair repeat at the origin) and separates the double-stranded (ds)DNA. Forms a right-handed helical filament on oriC DNA; dsDNA binds to the exterior of the filament while single-stranded (ss)DNA is stabiized in the filament's interior. The ATP-DnaA-oriC complex binds and stabilizes one strand of the AT-rich DNA unwinding element (DUE), permitting loading of DNA polymerase. After initiation quickly degrades to an ADP-DnaA complex that is not apt for DNA replication. Binds acidic phospholipids. The polypeptide is Chromosomal replication initiator protein DnaA (Desulfatibacillum aliphaticivorans).